We begin with the raw amino-acid sequence, 690 residues long: Elongation factor G (690 aa).

The tr-type G domain occupies 8–283 (SRCRNIGIMA…AVVDFLPSPS (276 aa)). GTP is bound by residues 17 to 24 (AHIDAGKT), 81 to 85 (DTPGH), and 135 to 138 (NKMD).

The protein belongs to the TRAFAC class translation factor GTPase superfamily. Classic translation factor GTPase family. EF-G/EF-2 subfamily.

The protein localises to the cytoplasm. Catalyzes the GTP-dependent ribosomal translocation step during translation elongation. During this step, the ribosome changes from the pre-translocational (PRE) to the post-translocational (POST) state as the newly formed A-site-bound peptidyl-tRNA and P-site-bound deacylated tRNA move to the P and E sites, respectively. Catalyzes the coordinated movement of the two tRNA molecules, the mRNA and conformational changes in the ribosome. This chain is Elongation factor G, found in Anaplasma marginale (strain St. Maries).